Consider the following 317-residue polypeptide: Protein phosphatase 1 regulatory subunit 3C-B (317 aa).

The CBM21 domain occupies 150–258; it reads RNRLKKNLVC…NNDGKNYKLV (109 aa).

In terms of assembly, interacts with PPP1CC catalytic subunit of PP1 and associates with glycogen. Forms complexes with glycogen phosphorylase, glycogen synthase and phosphorylase kinase which is necessary for its regulation of PP1 activity.

Functionally, acts as a glycogen-targeting subunit for PP1 and regulates its activity. Activates glycogen synthase, reduces glycogen phosphorylase activity and limits glycogen breakdown. In Danio rerio (Zebrafish), this protein is Protein phosphatase 1 regulatory subunit 3C-B (ppp1r3cb).